Consider the following 124-residue polypeptide: Iron-sulfur cluster insertion protein ErpA (124 aa).

Cysteine 52, cysteine 116, and cysteine 118 together coordinate iron-sulfur cluster.

Belongs to the HesB/IscA family. Homodimer. It depends on iron-sulfur cluster as a cofactor.

Required for insertion of 4Fe-4S clusters for at least IspG. In Vibrio atlanticus (strain LGP32) (Vibrio splendidus (strain Mel32)), this protein is Iron-sulfur cluster insertion protein ErpA.